The primary structure comprises 37 residues: Putative preoptic regulatory factor 1 (37 aa).

2 consecutive propeptides follow at residues 1–7 (MPYSLQP) and 18–37 (FPLC…PPDL).

It belongs to the GnRH family. As to expression, preoptic area and testis.

The protein resides in the secreted. Functionally, precursor for a gonadotropin regulatory hormone (GNRH) related decapeptide. This Rattus norvegicus (Rat) protein is Putative preoptic regulatory factor 1 (Porf1).